The following is a 257-amino-acid chain: UPF0246 protein ECA3888 (257 aa).

The protein belongs to the UPF0246 family.

The polypeptide is UPF0246 protein ECA3888 (Pectobacterium atrosepticum (strain SCRI 1043 / ATCC BAA-672) (Erwinia carotovora subsp. atroseptica)).